The chain runs to 387 residues: Homoserine O-succinyltransferase (387 aa).

The AB hydrolase-1 domain maps to 49 to 358 (NAILICHALS…DAEQGHDSFL (310 aa)). Ser-156 acts as the Nucleophile in catalysis. Arg-226 is a substrate binding site. Catalysis depends on residues Asp-321 and His-354. Asp-355 contacts substrate.

Belongs to the AB hydrolase superfamily. MetX family. In terms of assembly, homodimer.

Its subcellular location is the cytoplasm. It catalyses the reaction L-homoserine + succinyl-CoA = O-succinyl-L-homoserine + CoA. Its pathway is amino-acid biosynthesis; L-methionine biosynthesis via de novo pathway; O-succinyl-L-homoserine from L-homoserine: step 1/1. With respect to regulation, requires MetW for activity. Its function is as follows. Transfers a succinyl group from succinyl-CoA to L-homoserine, forming succinyl-L-homoserine. This chain is Homoserine O-succinyltransferase, found in Acinetobacter baylyi (strain ATCC 33305 / BD413 / ADP1).